A 210-amino-acid polypeptide reads, in one-letter code: Large ribosomal subunit protein uL4 (210 aa).

The span at 47-64 (SRQGTRSQKSRSEVSGSN) shows a compositional bias: polar residues. The disordered stretch occupies residues 47–83 (SRQGTRSQKSRSEVSGSNKKPWRQKGTGRARSGSVKS).

This sequence belongs to the universal ribosomal protein uL4 family. As to quaternary structure, part of the 50S ribosomal subunit.

In terms of biological role, one of the primary rRNA binding proteins, this protein initially binds near the 5'-end of the 23S rRNA. It is important during the early stages of 50S assembly. It makes multiple contacts with different domains of the 23S rRNA in the assembled 50S subunit and ribosome. Its function is as follows. Forms part of the polypeptide exit tunnel. This Blochmanniella pennsylvanica (strain BPEN) protein is Large ribosomal subunit protein uL4.